The following is a 1357-amino-acid chain: DNA-directed RNA polymerase subunit beta (1357 aa).

This sequence belongs to the RNA polymerase beta chain family. The RNAP catalytic core consists of 2 alpha, 1 beta, 1 beta' and 1 omega subunit. When a sigma factor is associated with the core the holoenzyme is formed, which can initiate transcription.

It catalyses the reaction RNA(n) + a ribonucleoside 5'-triphosphate = RNA(n+1) + diphosphate. In terms of biological role, DNA-dependent RNA polymerase catalyzes the transcription of DNA into RNA using the four ribonucleoside triphosphates as substrates. This is DNA-directed RNA polymerase subunit beta from Pseudomonas fluorescens (strain Pf0-1).